A 326-amino-acid chain; its full sequence is MYGEWAAVNILMMSYVYLVQGFSIEHRAVKDVSLERSSRSVLERSEQQIRAASTLEELLQVAHSEDWKLWRCRLKLKSLANVDSRSTSHRSTRFAATFYDTETLKVIDEEWQRTQCSPRETCVEVASELGKTTNTFFKPPCVNVFRCGGCCNEESVMCMNTSTSYISKQLFEISVPLTSVPELVPVKIANHTGCKCLPTGPRHPYSIIRRSIQIPEEDQCPHSKKLCPVDMLWDNTKCKCVLQDENPLPGTEDHSYLQEPALCGPHMMFDEDRCECVCKAPCPGDLIQHPENCSCFECKESLESCCQKHKMFHPDTCRSMVFSLSP.

Positions 1 to 21 are cleaved as a signal peptide; that stretch reads MYGEWAAVNILMMSYVYLVQG. The propeptide occupies 22–93; sequence FSIEHRAVKD…SRSTSHRSTR (72 aa). 3 disulfides stabilise this stretch: cysteine 116/cysteine 158, cysteine 147/cysteine 194, and cysteine 151/cysteine 196. Residues asparagine 160 and asparagine 190 are each glycosylated (N-linked (GlcNAc...) asparagine). The propeptide occupies 211-326; it reads SIQIPEEDQC…CRSMVFSLSP (116 aa). One copy of the 1; approximate repeat lies at 227 to 242; sequence CPVDMLWDNTKCKCVL. Positions 227–317 are 4 X 16 AA repeats of C-X(10)-C-X-C-X(1,3)-C; it reads CPVDMLWDNT…KHKMFHPDTC (91 aa). 2 tandem repeats follow at residues 263–278 and 282–298. The N-linked (GlcNAc...) asparagine glycan is linked to asparagine 292. One copy of the 4; truncated repeat lies at 306 to 317; sequence CQKHKMFHPDTC.

It belongs to the PDGF/VEGF growth factor family. Homodimer; non-covalent and antiparallel. In terms of processing, undergoes a complex proteolytic maturation which generates a variety of processed secreted forms with increased activity toward VEGFR-3 and VEGFR-2. VEGF-D first form an antiparallel homodimer linked by disulfide bonds before secretion. The fully processed VEGF-D is composed mostly of two VEGF homology domains (VHDs) bound by non-covalent interactions. In terms of tissue distribution, highly expressed in the spleen, kidney, lung, tongue, ovary and mammary gland.

It is found in the secreted. Growth factor active in angiogenesis, lymphangiogenesis and endothelial cell growth, stimulating their proliferation and migration and also has effects on the permeability of blood vessels. May function in the formation of the venous and lymphatic vascular systems during embryogenesis, and also in the maintenance of differentiated lymphatic endothelium in adults. Binds and activates VEGFR-3 (Flt4) receptor. The polypeptide is Vascular endothelial growth factor D (Rattus norvegicus (Rat)).